Reading from the N-terminus, the 320-residue chain is Olfactory receptor 10J1 (320 aa).

Topologically, residues 1-36 are extracellular; the sequence is MLLCFRFGNQSMKRENFTLITDFVFQGFSSFHEQQI. N-linked (GlcNAc...) asparagine glycosylation is found at N9 and N16. The helical transmembrane segment at 37–57 threads the bilayer; that stretch reads TLFGVFLALYILTLAGNIIIV. Residues 58 to 65 lie on the Cytoplasmic side of the membrane; it reads TIIRMDLH. Residues 66 to 86 traverse the membrane as a helical segment; sequence LHTPMYFFLSMLSTSETVYTL. At 87-110 the chain is on the extracellular side; sequence VILPRMLSSLVGMSQPISLAGCAT. A disulfide bond links C108 and C199. A helical membrane pass occupies residues 111–131; the sequence is QMFFFVTFGITNCFLLTAMGY. Topologically, residues 132 to 150 are cytoplasmic; sequence DRYVAICNPLRYMVIMNKR. Residues 151 to 171 traverse the membrane as a helical segment; that stretch reads LRIQLVLGACSIGLIVAITQV. The Extracellular portion of the chain corresponds to 172–207; that stretch reads TSVFRLPFCARKVPHFFCDIRPVMKLSCIDTTVNEI. A helical membrane pass occupies residues 208 to 227; the sequence is LTLIISVLVLVVPMGLVFIS. At 228–247 the chain is on the cytoplasmic side; sequence YVLIISTILKIASVEGRKKA. A helical transmembrane segment spans residues 248 to 268; it reads FATCASHLTVVIVHYSCASIA. Residues 269–281 are Extracellular-facing; sequence YLKPKSENTREHD. The helical transmembrane segment at 282–302 threads the bilayer; the sequence is QLISVTYTVITPLLNPVVYTL. Over 303–320 the chain is Cytoplasmic; it reads RNKEVKDALCRAVGGKFS.

This sequence belongs to the G-protein coupled receptor 1 family.

Its subcellular location is the cell membrane. Functionally, odorant receptor. The sequence is that of Olfactory receptor 10J1 (OR10J1) from Homo sapiens (Human).